Reading from the N-terminus, the 361-residue chain is Phosphoserine aminotransferase (361 aa).

L-glutamate is bound at residue Arg-43. Pyridoxal 5'-phosphate is bound by residues 77 to 78 (AS), Trp-103, Thr-153, Asp-173, and Gln-196. Lys-197 carries the post-translational modification N6-(pyridoxal phosphate)lysine. Pyridoxal 5'-phosphate is bound at residue 238–239 (NT).

Belongs to the class-V pyridoxal-phosphate-dependent aminotransferase family. SerC subfamily. Homodimer. Pyridoxal 5'-phosphate is required as a cofactor.

Its subcellular location is the cytoplasm. It carries out the reaction O-phospho-L-serine + 2-oxoglutarate = 3-phosphooxypyruvate + L-glutamate. It catalyses the reaction 4-(phosphooxy)-L-threonine + 2-oxoglutarate = (R)-3-hydroxy-2-oxo-4-phosphooxybutanoate + L-glutamate. It participates in amino-acid biosynthesis; L-serine biosynthesis; L-serine from 3-phospho-D-glycerate: step 2/3. Its pathway is cofactor biosynthesis; pyridoxine 5'-phosphate biosynthesis; pyridoxine 5'-phosphate from D-erythrose 4-phosphate: step 3/5. Its function is as follows. Catalyzes the reversible conversion of 3-phosphohydroxypyruvate to phosphoserine and of 3-hydroxy-2-oxo-4-phosphonooxybutanoate to phosphohydroxythreonine. The protein is Phosphoserine aminotransferase of Pseudomonas aeruginosa (strain LESB58).